A 143-amino-acid polypeptide reads, in one-letter code: Large-conductance mechanosensitive channel (143 aa).

2 helical membrane passes run 16–36 (VIDLAVGVVIGAAFGKIVTAL) and 84–104 (INTVVQFVIIAFAIFLVVKLI).

The protein belongs to the MscL family. As to quaternary structure, homopentamer.

It is found in the cell inner membrane. Functionally, channel that opens in response to stretch forces in the membrane lipid bilayer. May participate in the regulation of osmotic pressure changes within the cell. The chain is Large-conductance mechanosensitive channel from Xanthomonas campestris pv. campestris (strain 8004).